Consider the following 386-residue polypeptide: MAFIHLDVGFLYTLLVCTAFGSMLSNAEIKVNPPQDFEIVDPGYLGYLSLQWQPPLFPDNFKECTIEYELKYRNIDSENWKTIITKNLHYKDGFDLNKGIEAKINTLLPAQCTNGSEVRSSWAETTYWTSPQGNRETKIQDMDCVYYNWQYLVCSWKPGMGVHFDTNYQLFYWYEGLDHSAECTDYIKVNGKNMGCRFPYLESSDYKDFYICVNGSSESQPIRPSYFIFQLQNIVKPMPPDYLSLTVKNSEEINLKWNMPKGPIPAKCFIYEIEFTEDGTTWVTTTVENEIQITRTSNESQKLCFLVRSKVNIYCSDDGIWSEWSDEQCWKGDIWKETLVFFLIPFAFVSIFVLVITCLLLYKQRALLKTIFHTKKEVFSHQDTFC.

Residues 1–21 (MAFIHLDVGFLYTLLVCTAFG) form the signal peptide. The Extracellular portion of the chain corresponds to 22-338 (SMLSNAEIKV…CWKGDIWKET (317 aa)). Fibronectin type-III domains are found at residues 33–133 (PPQD…SPQG), 138–234 (KIQD…LQNI), and 239–338 (PPDY…WKET). A disulfide bond links Cys64 and Cys112. The N-linked (GlcNAc...) asparagine glycan is linked to Asn114. Cystine bridges form between Cys144–Cys154 and Cys183–Cys196. Asn214 and Asn298 each carry an N-linked (GlcNAc...) asparagine glycan. Cys268 and Cys315 are oxidised to a cystine. The WSXWS motif signature appears at 321–325 (WSEWS). The chain crosses the membrane as a helical span at residues 339–359 (LVFFLIPFAFVSIFVLVITCL). Topologically, residues 360 to 386 (LLYKQRALLKTIFHTKKEVFSHQDTFC) are cytoplasmic.

It belongs to the type I cytokine receptor family. Type 5 subfamily. As to quaternary structure, interacts with IL4RA. Interacts with high affinity to interleukin-13 (IL13), but not to interleukin-4 (IL4). Cleaved by MMP8 leading to a soluble form that is also able to interact with IL13. As to expression, expressed in kidney, placenta, liver, skeletal muscle and thymus. Expression was not seen in whole blood and heart.

The protein resides in the cell membrane. Cell surface receptor that plays a role in the regulation of IL-13-mediated responses. Functions as a decoy receptor that inhibits IL-13- and IL-4-mediated signal transduction via the JAK-STAT pathway and thereby modulates immune responses and inflammation. Serves as a functional signaling receptor for IL-13 in an alternative pathway involving AP-1 ultimately leading to the production of TGFB1. In Canis lupus familiaris (Dog), this protein is Interleukin-13 receptor subunit alpha-2 (IL13RA2).